The sequence spans 189 residues: Elongation factor P (189 aa).

It belongs to the elongation factor P family.

The protein localises to the cytoplasm. The protein operates within protein biosynthesis; polypeptide chain elongation. In terms of biological role, involved in peptide bond synthesis. Stimulates efficient translation and peptide-bond synthesis on native or reconstituted 70S ribosomes in vitro. Probably functions indirectly by altering the affinity of the ribosome for aminoacyl-tRNA, thus increasing their reactivity as acceptors for peptidyl transferase. The polypeptide is Elongation factor P (Rhizobium radiobacter (Agrobacterium tumefaciens)).